A 101-amino-acid chain; its full sequence is Pore-forming peptide amoebapore C (101 aa).

An N-terminal signal peptide occupies residues 1–24; it reads MKLFVLLCVFVLCLASQEKQQDRE. The region spanning 25 to 101 is the Saposin B-type domain; sequence IPVLCPVCTS…KLICGLIHAC (77 aa). Intrachain disulfides connect Cys29–Cys101, Cys32–Cys95, and Cys59–Cys70.

In terms of assembly, monomer. Homodimer. Hexamer; formed during insertion in the membrane.

It localises to the cytoplasmic granule. Functionally, forms pores in the cell membrane of host cells. Has antibacterial activity against M.luteus, no activity against E.coli. Implicated in the cytolytic activity of the parasite. This Entamoeba histolytica (strain ATCC 30459 / HM-1:IMSS / ABRM) protein is Pore-forming peptide amoebapore C.